The following is a 139-amino-acid chain: uncharacterized protein (139 aa).

This is an uncharacterized protein from Halalkalibacterium halodurans (strain ATCC BAA-125 / DSM 18197 / FERM 7344 / JCM 9153 / C-125) (Bacillus halodurans).